Consider the following 641-residue polypeptide: Protein zwilch (641 aa).

Phosphoserine is present on S312.

The protein belongs to the ZWILCH family. Component of the RZZ complex composed of rod, Zw10 and Zwilch.

The protein localises to the cytoplasm. The protein resides in the chromosome. Its subcellular location is the centromere. It localises to the kinetochore. It is found in the cytoskeleton. The protein localises to the spindle. Its function is as follows. Essential component of the mitotic checkpoint, which prevents cells from prematurely exiting mitosis. Required for the assembly of the dynein-dynactin, Mad2 complexes and spindly/CG15415 onto kinetochores. Its function related to the spindle assembly machinery is proposed to depend on its association in the RZZ complex. Failure to assemble the complex due to the absence of any one of its components, results in the incorrect redistribution of the remaining components to diverse membrane compartments. The polypeptide is Protein zwilch (Drosophila melanogaster (Fruit fly)).